Reading from the N-terminus, the 1379-residue chain is DNA-directed RNA polymerase subunit beta'' (1379 aa).

Zn(2+)-binding residues include Cys-220, Cys-291, Cys-298, and Cys-301.

The protein belongs to the RNA polymerase beta' chain family. RpoC2 subfamily. As to quaternary structure, in plastids the minimal PEP RNA polymerase catalytic core is composed of four subunits: alpha, beta, beta', and beta''. When a (nuclear-encoded) sigma factor is associated with the core the holoenzyme is formed, which can initiate transcription. Zn(2+) is required as a cofactor.

It is found in the plastid. It carries out the reaction RNA(n) + a ribonucleoside 5'-triphosphate = RNA(n+1) + diphosphate. DNA-dependent RNA polymerase catalyzes the transcription of DNA into RNA using the four ribonucleoside triphosphates as substrates. The protein is DNA-directed RNA polymerase subunit beta'' of Cuscuta reflexa (Southern Asian dodder).